The sequence spans 757 residues: Mitofusin-2 (757 aa).

Topologically, residues 1–604 are cytoplasmic; that stretch reads MSLLFSRCNS…TQEEFMVSMV (604 aa). A part of a helix bundle domain, formed by helices from N-terminal and C-terminal regions region spans residues 30 to 94; that stretch reads KHFVTAKKKI…VRGISEVLAR (65 aa). The Dynamin-type G domain occupies 93-342; it reads ARRHMKVAFF…VRMFEFQNFE (250 aa). A G1 motif region spans residues 103–110; that stretch reads GRTSNGKS. 106–111 contacts GTP; that stretch reads SNGKST. Thr111 is modified (phosphothreonine; by PINK1). Positions 129-130 are G2 motif; it reads TT. The interval 199–202 is G3 motif; that stretch reads DSPG. 258–261 lines the GTP pocket; sequence NRWD. The tract at residues 258–261 is G4 motif; that stretch reads NRWD. A region of interest (G5 motif) is located at residue Glu288. GTP-binding residues include Ser305 and Lys307. Residues 359–385 form a part of a helix bundle domain, formed by helices from N-terminal and C-terminal regions region; sequence EQHTVRAKQIAEAVRLIMDSLHMAARE. The stretch at 391 to 434 forms a coiled coil; the sequence is EEMREERQDRLKFIDKQLELLAQDYKLRIKQITEEVERQVSTAM. Residue Ser442 is modified to Phosphoserine; by PINK1. Residues 605-625 traverse the membrane as a helical segment; it reads TGLASLTSRTSMGILVVGGVV. Residue Trp626 is a topological domain, mitochondrial intermembrane. The helical transmembrane segment at 627-647 threads the bilayer; the sequence is KAVGWRLIALSFGLYGLLYVY. At 648–757 the chain is on the cytoplasmic side; sequence ERLTWTTKAK…FTHQYLQPSR (110 aa). Residues 695-738 are a coiled coil; it reads TFAHLCQQVDVTRENLEQEIAAMNKKIEVLDSLQSKAKLLRNKA. The part of a helix bundle domain, formed by helices from N-terminal and C-terminal regions stretch occupies residues 722–753; the sequence is EVLDSLQSKAKLLRNKAGWLDSELNMFTHQYL.

The protein belongs to the TRAFAC class dynamin-like GTPase superfamily. Dynamin/Fzo/YdjA family. Mitofusin subfamily. In terms of assembly, forms homomultimers and heteromultimers with MFN1. Oligomerization is essential for mitochondrion fusion. Interacts with VAT1. Interacts with STOML2; may form heterooligomers. Interacts (phosphorylated) with PRKN. Interacts with EIF2AK3. Interacts with THG1L; THG1L probably functions as a guanyl-nucleotide exchange factor/GEF, activating MFN2. Phosphorylated by PINK1. Post-translationally, ubiquitinated by non-degradative ubiquitin by PRKN, promoting mitochondrial fusion; deubiquitination by USP30 inhibits mitochondrial fusion. Ubiquitinated by HUWE1 when dietary stearate (C18:0) levels are low; ubiquitination inhibits mitochondrial fusion. As to expression, ubiquitous; expressed at low level. Highly expressed in heart and kidney.

It is found in the mitochondrion outer membrane. It carries out the reaction GTP + H2O = GDP + phosphate + H(+). Mitochondrial outer membrane GTPase that mediates mitochondrial clustering and fusion. Mitochondria are highly dynamic organelles, and their morphology is determined by the equilibrium between mitochondrial fusion and fission events. Overexpression induces the formation of mitochondrial networks. Membrane clustering requires GTPase activity and may involve a major rearrangement of the coiled coil domains. Plays a central role in mitochondrial metabolism and may be associated with obesity and/or apoptosis processes. Plays an important role in the regulation of vascular smooth muscle cell proliferation. Involved in the clearance of damaged mitochondria via selective autophagy (mitophagy). Is required for PRKN recruitment to dysfunctional mitochondria. Involved in the control of unfolded protein response (UPR) upon ER stress including activation of apoptosis and autophagy during ER stress. Acts as an upstream regulator of EIF2AK3 and suppresses EIF2AK3 activation under basal conditions. This Homo sapiens (Human) protein is Mitofusin-2.